Consider the following 194-residue polypeptide: UPF0215 protein TV0037 (194 aa).

The protein belongs to the UPF0215 family.

In Thermoplasma volcanium (strain ATCC 51530 / DSM 4299 / JCM 9571 / NBRC 15438 / GSS1), this protein is UPF0215 protein TV0037.